A 156-amino-acid polypeptide reads, in one-letter code: MEENNQIVEKITRIVNPFIEEMNLSLVDVEYVQDGGYWYVRIFIENLNGDLNIEDCSKLSSKIEDKVEELIEHKFFLEVSSPGLERPLKKLEDYTRFIGEKITLHLKHKLDDKKQFKTIIKEVNGDNIIFLMDKKEVEIKFNEIRKANILFEFNDF.

It belongs to the RimP family.

The protein localises to the cytoplasm. Functionally, required for maturation of 30S ribosomal subunits. The sequence is that of Ribosome maturation factor RimP from Fusobacterium nucleatum subsp. nucleatum (strain ATCC 25586 / DSM 15643 / BCRC 10681 / CIP 101130 / JCM 8532 / KCTC 2640 / LMG 13131 / VPI 4355).